The chain runs to 260 residues: LOB domain-containing protein 6 (260 aa).

An LOB domain is found at 32 to 133; sequence SPCAACKFLR…QDLARAKYEL (102 aa).

It belongs to the LOB domain-containing protein family. As to quaternary structure, interacts with RS2. Expressed in leaves, leaf primordia, immature ears, immature tassels, whole ovules, silk and husk leaves. Found on the adaxial side of organs.

Its subcellular location is the nucleus. Functionally, promotes the switch from proliferation to differentiation in the embryo sac. Negative regulator of cell proliferation in the adaxial side of leaves. Regulates the formation of a symmetric lamina and the establishment of venation. Interacts directly with RS2 (rough sheath 2) to repress some knox homeobox genes. The chain is LOB domain-containing protein 6 (LBD6) from Zea mays (Maize).